The following is a 112-amino-acid chain: Prostatic steroid-binding protein C2 (112 aa).

Residues 1-20 (MRLSLCLLTILVVCCYEANG) form the signal peptide. Gln21 carries the pyrrolidone carboxylic acid modification.

This sequence belongs to the secretoglobin family. Lipophilin subfamily. In terms of assembly, prostatein is composed of three different peptides called C1, C2 and C3. These form covalent C1:C3 (F) and C2:C3 (S) heterodimers whose noncovalent association forms tetrameric (C1:C3/C3:C2) prostatein molecules. Linked by three disulfide bonds to C3. Post-translationally, the N-terminus is blocked.

It localises to the secreted. Functionally, part of prostatein which is the major secretory glycoprotein of ventral prostate gland. The chain is Prostatic steroid-binding protein C2 (Psbpc2) from Rattus norvegicus (Rat).